A 930-amino-acid polypeptide reads, in one-letter code: MPSLLPLVLTFLSVSSPSWCQNSDIESLKASNGDSFPWNNMRLPEYMTPIHYDLMIHANLSTLTFWGKTEVEIIASRPTSTIIMHSHHLQISKATLRRGAGEMLSEEPLKVLEYPAHEQVALLAAQPLLAGSLYTVIIDYAANLSESFHGFYKSTYRTQEGEMRILAATQFEPTAARMAFPCFDEPALKASFSIKIKRDPRHLAISNMPLVKSVNVAEGLIEDHFDITVKMSTYLVAFIISDFKSVSKMTKSGVKVSVYAVPDKINQADYALDAAVTLLEFYEDYFNIPYPLPKQDLAAIPDFQSGAMENWGLTTYRESSLLYDKEKSSASSKLGITMIVSHELAHQWFGNLVTMEWWNDLWLNEGFAKFMEFVSVTVTHPELKVEDYFFGKCFNAMEVDALNSSHPVSTPVENPAQIREMFDDVSYEKGACILNMLRDYLSADTFKRGIVQYLQKYSYKNTKNEDLWNSMMHICPTDGTQTMDGFCSRSQHSSSTSHWRQEVVDVKTMMNTWTLQKGFPLITITVSGRNVHMKQEHYMKGSERFPETGYLWHVPLTFITSKSDSVQRFLLKTKTDVLILPEAVQWIKFNVGMNGYYIVHYADDGWASLSGLLKEAHTTISSNDRASLINNAFQLVSIEKLSIEKALDLTLYLKNETEIMPIFQALNELIPMYKLMEKRDMIEVETQFKDFLLKLLKDLIDKQTWTDEGSVSERMLRSQLLLLACVRNYQPCVQRAERYFREWKSSNGNMSIPIDVTLAVFAVGAQNTEGWDFLYSKYQSSLSSTEKSQIEFSLCTSKDPEKLQWLLDQSFKGEIIKTQEFPHILTLIGRNPVGYPLAWKFLRENWNKLVQKFELGSSSIAHMVMGTTDQFSTRARLEEVKGFFSSLKENGSQLRCVQQTIETIEENIRWMDKNFDKIRLWLQKEKPELL.

Topologically, residues M1–P2 are cytoplasmic. A helical; Signal-anchor for type II membrane protein transmembrane segment spans residues S3–S23. Residues D24–L930 lie on the Lumenal side of the membrane. N-linked (GlcNAc...) asparagine glycosylation is found at N59 and N143. Residues E172 and G306 to N310 each bind substrate. A Zn(2+)-binding site is contributed by H342. Residue E343 is part of the active site. Residues H346 and E365 each coordinate Zn(2+). An intrachain disulfide couples C393 to C432. N403 and N655 each carry an N-linked (GlcNAc...) asparagine glycan. C725 and C732 are joined by a disulfide. 2 N-linked (GlcNAc...) asparagine glycosylation sites follow: N749 and N890.

It belongs to the peptidase M1 family. In terms of assembly, monomer. May also exist as a heterodimer; with ERAP2. Interacts with RBMX. Zn(2+) serves as cofactor. In terms of processing, N-glycosylated.

The protein localises to the endoplasmic reticulum membrane. Its function is as follows. Aminopeptidase that plays a central role in peptide trimming, a step required for the generation of most HLA class I-binding peptides. Peptide trimming is essential to customize longer precursor peptides to fit them to the correct length required for presentation on MHC class I molecules. Strongly prefers substrates 9-16 residues long. Rapidly degrades 13-mer to a 9-mer and then stops. Preferentially hydrolyzes the residue Leu and peptides with a hydrophobic C-terminus, while it has weak activity toward peptides with charged C-terminus. May play a role in the inactivation of peptide hormones. May be involved in the regulation of blood pressure through the inactivation of angiotensin II and/or the generation of bradykinin in the kidney. This Mus musculus (Mouse) protein is Endoplasmic reticulum aminopeptidase 1 (Erap1).